A 545-amino-acid polypeptide reads, in one-letter code: Chaperonin GroEL 5 (545 aa).

ATP-binding positions include 30-33 (TLGP), K51, 87-91 (DGTTT), G415, and D495.

This sequence belongs to the chaperonin (HSP60) family. In terms of assembly, forms a cylinder of 14 subunits composed of two heptameric rings stacked back-to-back. Interacts with the co-chaperonin GroES.

The protein resides in the cytoplasm. It carries out the reaction ATP + H2O + a folded polypeptide = ADP + phosphate + an unfolded polypeptide.. Its function is as follows. Together with its co-chaperonin GroES, plays an essential role in assisting protein folding. The GroEL-GroES system forms a nano-cage that allows encapsulation of the non-native substrate proteins and provides a physical environment optimized to promote and accelerate protein folding. In Sinorhizobium medicae (strain WSM419) (Ensifer medicae), this protein is Chaperonin GroEL 5.